The primary structure comprises 202 residues: Nitrophorin-3 (202 aa).

Positions Met1–Gly23 are cleaved as a signal peptide. 2 disulfide bridges follow: Cys25/Cys144 and Cys62/Cys193. Residue His80 participates in heme binding.

Belongs to the calycin superfamily. Nitrophorin family. In terms of assembly, interacts weakly with host coagulation factor IX (F9) (inactive and activated) in the presence of Ca(2+). As to expression, salivary gland (at protein level).

Its subcellular location is the secreted. Its function is as follows. Heme-based protein that deliver nitric oxide gas (NO) to the victim while feeding, resulting in vasodilation and inhibition of platelet aggregation. Reversibly binds nitric oxide (NO). Also binds tightly to histamine, which is released by the host to induce wound healing. Exhibits weak anticoagulant activity. The polypeptide is Nitrophorin-3 (Rhodnius prolixus (Triatomid bug)).